A 312-amino-acid chain; its full sequence is Ribosomal RNA small subunit methyltransferase H (312 aa).

S-adenosyl-L-methionine contacts are provided by residues 35 to 37 (GGH), Asp55, Phe79, Asp100, and Gln107.

Belongs to the methyltransferase superfamily. RsmH family.

The protein localises to the cytoplasm. The catalysed reaction is cytidine(1402) in 16S rRNA + S-adenosyl-L-methionine = N(4)-methylcytidine(1402) in 16S rRNA + S-adenosyl-L-homocysteine + H(+). Specifically methylates the N4 position of cytidine in position 1402 (C1402) of 16S rRNA. This is Ribosomal RNA small subunit methyltransferase H from Azoarcus sp. (strain BH72).